A 365-amino-acid chain; its full sequence is Protein-glutamate methylesterase/protein-glutamine glutaminase 2 (365 aa).

A Response regulatory domain is found at 6-123 (RVLIIDDSAS…ADSLSDDAMR (118 aa)). At aspartate 57 the chain carries 4-aspartylphosphate. The CheB-type methylesterase domain occupies 173 to 359 (AKTTEMVVCV…PLDQIAREVL (187 aa)). Catalysis depends on residues serine 185, histidine 211, and aspartate 307.

The protein belongs to the CheB family. Post-translationally, phosphorylated by CheA. Phosphorylation of the N-terminal regulatory domain activates the methylesterase activity.

It localises to the cytoplasm. It catalyses the reaction [protein]-L-glutamate 5-O-methyl ester + H2O = L-glutamyl-[protein] + methanol + H(+). The catalysed reaction is L-glutaminyl-[protein] + H2O = L-glutamyl-[protein] + NH4(+). Involved in chemotaxis. Part of a chemotaxis signal transduction system that modulates chemotaxis in response to various stimuli. Catalyzes the demethylation of specific methylglutamate residues introduced into the chemoreceptors (methyl-accepting chemotaxis proteins or MCP) by CheR. Also mediates the irreversible deamidation of specific glutamine residues to glutamic acid. The chain is Protein-glutamate methylesterase/protein-glutamine glutaminase 2 from Rhizobium johnstonii (strain DSM 114642 / LMG 32736 / 3841) (Rhizobium leguminosarum bv. viciae).